We begin with the raw amino-acid sequence, 267 residues long: MADS-box transcription factor 15 (267 aa).

The 61-residue stretch at 1–61 folds into the MADS-box domain; sequence MGRGKVQLKR…GKLYEYATDS (61 aa). The 91-residue stretch at 88 to 178 folds into the K-box domain; sequence EGNWCHEYRK…QKELVERQKN (91 aa). The tract at residues 179–215 is disordered; that stretch reads VRGQQQVGQWDQTQVQAQAQAQPQAQTSSSSSSMLRD. Residues 182 to 215 show a composition bias toward low complexity; sequence QQQVGQWDQTQVQAQAQAQPQAQTSSSSSSMLRD.

As to quaternary structure, may interact with the K-box of MADS1 and MADS6.

Its subcellular location is the nucleus. Functionally, probable transcription factor. The polypeptide is MADS-box transcription factor 15 (MADS15) (Oryza sativa subsp. japonica (Rice)).